The chain runs to 234 residues: Putative N-acetylmannosamine-6-phosphate 2-epimerase (234 aa).

The protein belongs to the NanE family.

It carries out the reaction an N-acyl-D-glucosamine 6-phosphate = an N-acyl-D-mannosamine 6-phosphate. It participates in amino-sugar metabolism; N-acetylneuraminate degradation; D-fructose 6-phosphate from N-acetylneuraminate: step 3/5. Functionally, converts N-acetylmannosamine-6-phosphate (ManNAc-6-P) to N-acetylglucosamine-6-phosphate (GlcNAc-6-P). This chain is Putative N-acetylmannosamine-6-phosphate 2-epimerase, found in Klebsiella pneumoniae subsp. pneumoniae (strain ATCC 700721 / MGH 78578).